The chain runs to 173 residues: MKETIRIIGIDPGLRRTGWGIVESLGNSLHFIGSGTVTSNAEMDLASRLCQLHEGLSKVLHEFMPHEAAVEHTFVNKDATATLKLGQARGIALLAPAQAGLPVAEYAPNAVKKAVIGVGHGEKQQIHMMVKVLMPRASFDTSDAADALAIAICHAHHRQSIVSARRMQALLAG.

Catalysis depends on residues aspartate 11, glutamate 71, and aspartate 143. Residues aspartate 11, glutamate 71, and aspartate 143 each contribute to the Mg(2+) site.

This sequence belongs to the RuvC family. In terms of assembly, homodimer which binds Holliday junction (HJ) DNA. The HJ becomes 2-fold symmetrical on binding to RuvC with unstacked arms; it has a different conformation from HJ DNA in complex with RuvA. In the full resolvosome a probable DNA-RuvA(4)-RuvB(12)-RuvC(2) complex forms which resolves the HJ. Mg(2+) serves as cofactor.

It is found in the cytoplasm. The enzyme catalyses Endonucleolytic cleavage at a junction such as a reciprocal single-stranded crossover between two homologous DNA duplexes (Holliday junction).. Functionally, the RuvA-RuvB-RuvC complex processes Holliday junction (HJ) DNA during genetic recombination and DNA repair. Endonuclease that resolves HJ intermediates. Cleaves cruciform DNA by making single-stranded nicks across the HJ at symmetrical positions within the homologous arms, yielding a 5'-phosphate and a 3'-hydroxyl group; requires a central core of homology in the junction. The consensus cleavage sequence is 5'-(A/T)TT(C/G)-3'. Cleavage occurs on the 3'-side of the TT dinucleotide at the point of strand exchange. HJ branch migration catalyzed by RuvA-RuvB allows RuvC to scan DNA until it finds its consensus sequence, where it cleaves and resolves the cruciform DNA. The sequence is that of Crossover junction endodeoxyribonuclease RuvC from Brucella abortus (strain 2308).